A 323-amino-acid polypeptide reads, in one-letter code: Probable inactive poly [ADP-ribose] polymerase SRO2 (323 aa).

A PARP catalytic domain is found at 31–257 (SSVSHAGSSF…FASRPSSPWV (227 aa)). In terms of domain architecture, RST spans 250-321 (SRPSSPWVSF…IKNHKNRNKV (72 aa)).

Interacts with STO.

The protein resides in the nucleus. Probable inactive ADP-ribosyltransferase that may be involved in stress and developmental responses. This is Probable inactive poly [ADP-ribose] polymerase SRO2 (SRO2) from Arabidopsis thaliana (Mouse-ear cress).